Here is a 172-residue protein sequence, read N- to C-terminus: MNREEKKELVSELNSLFGEASACVVTHYKGMTVAELEQLRKGMRAAGASFRVTKNRITRLALADTPFEGLADLFTGPTAIAISKDPVAPAKVCVEFAKKNEKLVILGGAMQGNVLDKQGIEALAKLPSLDELRGRLIGMITTPATRIAGVTQAPAAQLARVFNAYATKEEAA.

This sequence belongs to the universal ribosomal protein uL10 family. As to quaternary structure, part of the ribosomal stalk of the 50S ribosomal subunit. The N-terminus interacts with L11 and the large rRNA to form the base of the stalk. The C-terminus forms an elongated spine to which L12 dimers bind in a sequential fashion forming a multimeric L10(L12)X complex.

Its function is as follows. Forms part of the ribosomal stalk, playing a central role in the interaction of the ribosome with GTP-bound translation factors. The chain is Large ribosomal subunit protein uL10 from Rhodospirillum rubrum (strain ATCC 11170 / ATH 1.1.1 / DSM 467 / LMG 4362 / NCIMB 8255 / S1).